The following is a 441-amino-acid chain: Deoxyguanosinetriphosphate triphosphohydrolase-like protein 1 (441 aa).

Positions 62 to 255 (RLTHSLEAAQ…MELADDIAYG (194 aa)) constitute an HD domain.

The protein belongs to the dGTPase family. Type 2 subfamily.

This chain is Deoxyguanosinetriphosphate triphosphohydrolase-like protein 1, found in Vibrio cholerae serotype O1 (strain ATCC 39315 / El Tor Inaba N16961).